We begin with the raw amino-acid sequence, 360 residues long: 45 kDa calcium-binding protein (360 aa).

The signal sequence occupies residues 1-29 (MVSKQAFLFSLGSLYLSLLFVFLLMDVYA). Asparagine 33 carries an N-linked (GlcNAc...) asparagine glycan. 5 consecutive EF-hand domains span residues 96–131 (RNRR…KTEE), 135–170 (EAVN…SKGF), 231–266 (MLKF…TVEN), 276–311 (WVRD…MNEY), and 312–347 (NALN…FTGS). Aspartate 109, asparagine 111, aspartate 113, glutamine 115, glutamate 120, aspartate 148, aspartate 150, aspartate 152, histidine 154, glutamate 159, aspartate 244, aspartate 246, aspartate 248, lysine 250, glutamate 255, aspartate 289, asparagine 291, aspartate 293, glutamate 300, aspartate 325, asparagine 327, aspartate 329, histidine 331, and glutamate 336 together coordinate Ca(2+).

This sequence belongs to the CREC family.

It is found in the golgi apparatus lumen. Its function is as follows. May regulate calcium-dependent activities in the endoplasmic reticulum lumen or post-ER compartment. This Xenopus tropicalis (Western clawed frog) protein is 45 kDa calcium-binding protein (sdf4).